The primary structure comprises 117 residues: Appetite-regulating hormone (117 aa).

The first 23 residues, 1–23 (MPSLGTMCSLLLFSVLWVDLAMA), serve as a signal peptide directing secretion. Serine 26 carries O-decanoyl serine; alternate lipidation. A lipid anchor (O-hexanoyl serine; alternate) is attached at serine 26. The O-octanoyl serine; alternate moiety is linked to residue serine 26. A disordered region spans residues 30–68 (PEHQKLQQRKESKKPPAKLQPRALEGSLGPEDTSQVEEA). The span at 31-43 (EHQKLQQRKESKK) shows a compositional bias: basic and acidic residues. Residues 52–75 (ALEGSLGPEDTSQVEEAEDELEIR) constitute a propeptide, removed in mature form. Position 98 is a leucine amide (leucine 98). Positions 99–117 (GKFLQEVLWEDTNEALADE) are cleaved as a propeptide — removed in mature form.

The protein belongs to the motilin family. In terms of processing, O-octanoylated by GOAT/MBOAT4. O-octanoylation is essential for ghrelin activity. Post-translationally, amidation of Leu-98 is essential for obestatin activity.

It is found in the secreted. Its function is as follows. Ghrelin is the ligand for growth hormone secretagogue receptor type 1 (GHSR). Induces the release of growth hormone from the pituitary. Has an appetite-stimulating effect, induces adiposity and stimulates gastric acid secretion. Involved in growth regulation. Obestatin may be the ligand for GPR39. May have an appetite-reducing effect resulting in decreased food intake. May reduce gastric emptying activity and jejunal motility. The protein is Appetite-regulating hormone (GHRL) of Canis lupus familiaris (Dog).